The sequence spans 540 residues: PTS system alpha-glucoside-specific EIICB component (540 aa).

Residues 1-420 (MLSQIQRFGG…LNLKTPGREE (420 aa)) form the PTS EIIC type-1 domain. Helical transmembrane passes span 12–32 (MFTP…AIML), 87–107 (ACLA…AMGM), 130–150 (IAGI…SGLV), 174–194 (FVVI…LLGW), 201–221 (IESL…VYIF), 225–245 (ILIP…GPAV), 277–297 (FALH…ALYF), 307–327 (VAGL…TEPL), 329–349 (FTFL…AATM), 352–372 (VMYI…QFLP), and 384–404 (SMMF…FVVF). In terms of domain architecture, PTS EIIB type-1 spans 448-530 (LGQAAGFLQA…ENLMKDSLST (83 aa)). The active-site Phosphocysteine intermediate; for EIIB activity is the Cys470.

It localises to the cell membrane. Its function is as follows. The phosphoenolpyruvate-dependent sugar phosphotransferase system (sugar PTS), a major carbohydrate active -transport system, catalyzes the phosphorylation of incoming sugar substrates concomitantly with their translocation across the cell membrane. This system is involved in alpha-glucoside transport. In terms of biological role, involved in the transport and simultaneous phosphorylation at O-6 of the glucosyl moiety of sucrose and its five linkage-isomeric alpha-D-glucosyl-D-fructoses. Can also transport maltose, isomaltose and maltitol, phosphorylating at O-6 of their non-reducing glucose portion. This is PTS system alpha-glucoside-specific EIICB component (aglA) from Klebsiella pneumoniae.